Consider the following 777-residue polypeptide: Semaphorin-4F (777 aa).

The signal sequence occupies residues 1 to 40; that stretch reads MLARAERPRPGPRPPPVSLFPPPSSLLLLLLAMLSAPVCG. Over 41–667 the chain is Extracellular; the sequence is RVPRSVPRTS…PANRAHTVVG (627 aa). The region spanning 48 to 516 is the Sema domain; sequence RTSLPISEAD…SHTEVTQVNT (469 aa). Residue N70 is glycosylated (N-linked (GlcNAc...) asparagine). A disulfide bridge connects residues C118 and C128. An N-linked (GlcNAc...) asparagine glycan is attached at N139. 3 cysteine pairs are disulfide-bonded: C146/C155, C279/C390, and C303/C349. The N-linked (GlcNAc...) asparagine glycan is linked to N515. The 52-residue stretch at 518-569 folds into the PSI domain; it reads NCGRLQSCSECILAQDPVCAWSFRLDACVAHAGEHRGMVQDIESADVSSLCP. 3 disulfides stabilise this stretch: C519/C536, C528/C545, and C593/C634. The Ig-like C2-type domain occupies 586–641; it reads VGHVVLPCSPSSAWASCVWHQPSGVTSLTPRRDGLEVVVTPGAMGAYACECQEGGA. Residues 668–688 form a helical membrane-spanning segment; it reads AGLVGFFLGVLAASLTLLLIG. At 689–777 the chain is on the cytoplasmic side; sequence RRQQRRRQRE…PLATCDETSI (89 aa). Residues 703-742 form a disordered region; that stretch reads DKVGLDLGAPPSGTTSYSQDPPSPSPEDERLPLALGKRGS. Phosphoserine is present on residues S725 and S727. The short motif at 775-777 is the PDZ-binding element; it reads TSI.

This sequence belongs to the semaphorin family. As to quaternary structure, interacts (via PDZ-binding motif) with DLG4/SAP90 (via PDZ domain 2); this interaction may promote translocation of DLG4/SAP90 to the membrane. In terms of tissue distribution, expressed throughout the adult brain, where it shows particularly strong expression in the hippocampus, corpus callosum, granular layer and deep nuclei of the cerebellum, and the mitral layer of the olfactory bulb (at protein level). At the cellular level, detected in neuronal precursors, postmitotic neurons, pyramidal neurons, and glial cells including mature oligodendocytes and oligodendroglial precursor cells (at protein level).

Its subcellular location is the cell membrane. The protein localises to the postsynaptic density. It localises to the perikaryon. The protein resides in the cell projection. It is found in the dendrite. Probable cell surface receptor that regulates oligodendroglial precursor cell migration. Might also regulate differentiation of oligodendroglial precursor cells. Has growth cone collapse activity against retinal ganglion-cell axons. This Mus musculus (Mouse) protein is Semaphorin-4F (Sema4f).